A 228-amino-acid polypeptide reads, in one-letter code: Adapter protein MecA (228 aa).

It belongs to the MecA family. As to quaternary structure, homodimer.

In terms of biological role, enables the recognition and targeting of unfolded and aggregated proteins to the ClpC protease or to other proteins involved in proteolysis. This chain is Adapter protein MecA, found in Lacticaseibacillus paracasei (strain ATCC 334 / BCRC 17002 / CCUG 31169 / CIP 107868 / KCTC 3260 / NRRL B-441) (Lactobacillus paracasei).